The primary structure comprises 386 residues: Oxytocin receptor (386 aa).

The segment at 1 to 31 is disordered; the sequence is MEGVLAANWSAEAVNSSAAPPEAEGNRTAGP. The Extracellular segment spans residues 1 to 38; that stretch reads MEGVLAANWSAEAVNSSAAPPEAEGNRTAGPPQRNEAL. N-linked (GlcNAc...) asparagine glycosylation is found at asparagine 8, asparagine 15, and asparagine 26. A helical transmembrane segment spans residues 39-63; that stretch reads ARVEVAVLCLILFLALSGNACVLLA. Residues 64 to 74 are Cytoplasmic-facing; sequence LRTTRHKHSRL. The helical transmembrane segment at 75-97 threads the bilayer; the sequence is FFFMKHLSIADLVVAVFQVLPQL. The Extracellular segment spans residues 98–113; it reads LWDITFRFYGPDLLCR. Cysteine 112 and cysteine 187 are disulfide-bonded. Residues 114-135 form a helical membrane-spanning segment; that stretch reads LVKYLQVVGMFASTYLLLLMSL. The Cytoplasmic segment spans residues 136-154; the sequence is DRCLAICQPLRALRRPADR. A helical membrane pass occupies residues 155–175; that stretch reads LAVLATWLGCLVASAPQVHIF. Topologically, residues 176–202 are extracellular; the sequence is SLREVADGVFDCWAVFIQPWGPKAYIT. Residues 203–225 form a helical membrane-spanning segment; it reads WITLAVYIVPVIVLAACYGLISF. Over 226 to 277 the chain is Cytoplasmic; the sequence is KIWQNLRLKTAAEAAEAIAGTEGAAAGSRGRAALARVSSVKLISKAKIRTVK. Residues 278-296 form a helical membrane-spanning segment; the sequence is MTFIIVLAFIVCWTPFFFV. Topologically, residues 297–311 are extracellular; it reads QMWSVWDADAPKEAS. A helical transmembrane segment spans residues 312 to 334; the sequence is AFIIAMLLASLNSCCNPWIYMLF. At 335–386 the chain is on the cytoplasmic side; sequence TGHLFHELVQRFLCCSSSHLKTSRPGETSVSKKSNSSTFVLSQHSSSQKSCS. A compositionally biased stretch (polar residues) spans 355–375; it reads KTSRPGETSVSKKSNSSTFVL. Residues 355 to 386 are disordered; that stretch reads KTSRPGETSVSKKSNSSTFVLSQHSSSQKSCS. Residues serine 368 and serine 370 each carry the phosphoserine modification. Residues 376-386 show a composition bias toward low complexity; it reads SQHSSSQKSCS.

It belongs to the G-protein coupled receptor 1 family. Vasopressin/oxytocin receptor subfamily.

The protein resides in the cell membrane. Its function is as follows. Receptor for oxytocin. The activity of this receptor is mediated by G proteins which activate a phosphatidylinositol-calcium second messenger system. The polypeptide is Oxytocin receptor (OXTR) (Sus scrofa (Pig)).